Reading from the N-terminus, the 775-residue chain is Dipeptidyl peptidase 4 (775 aa).

The signal sequence occupies residues 1–15; the sequence is MKFLSLLLLAGIAQA. Asn81, Asn111, Asn170, and Asn219 each carry an N-linked (GlcNAc...) asparagine glycan. Residues Ser613, Asp690, and His725 each act as charge relay system in the active site.

This sequence belongs to the peptidase S9B family.

The protein resides in the secreted. The catalysed reaction is Release of an N-terminal dipeptide, Xaa-Yaa-|-Zaa-, from a polypeptide, preferentially when Yaa is Pro, provided Zaa is neither Pro nor hydroxyproline.. Functionally, extracellular dipeptidyl-peptidase which removes N-terminal dipeptides sequentially from polypeptides having unsubstituted N-termini provided that the penultimate residue is proline. Contributes to pathogenicity. The polypeptide is Dipeptidyl peptidase 4 (DPP4) (Trichophyton equinum (Horse ringworm fungus)).